The primary structure comprises 466 residues: Integrin-linked protein kinase homolog pat-4 (466 aa).

ANK repeat units lie at residues 50-79 (HAFSLLHWAAKGGHVAIAEMLLSRGARVNS), 83-112 (GDDTSLHLAAAHGHRQIVVKLLSRKADVNA), and 116-145 (HGMTPLHYACFWGYEQIAEDLISCGAAVNV). Residues 210 to 465 (LNLITKIAES…QIIPILERMI (256 aa)) enclose the Protein kinase domain.

Belongs to the protein kinase superfamily. TKL Ser/Thr protein kinase family. In terms of assembly, interacts (via protein kinase domain) with unc-112 (via N-terminus). Interacts (via ANK repeats) with unc-97 (via first LIM domain). Interacts (via protein kinase domain) with pat-6 (via C-terminus CH domain). May form a complex with unc-112, unc-97 and pat-6. Does not interact with integrin pat-3. Component of an integrin containing attachment complex, composed of at least pat-2, pat-3, pat-4, pat-6, unc-52, unc-97 and unc-112. Expressed in body wall muscle.

It is found in the cytoplasm. Its subcellular location is the myofibril. It localises to the sarcomere. The protein localises to the m line. The protein resides in the basal cell membrane. Functionally, probable pseudokinase that acts as an adapter protein. Component of an integrin containing attachment complex, which is required for muscle development and maintenance. Involved in the assembly of dense bodies and M lines during body wall muscle development by recruiting several of their components including integrin pat-3, cpna-1, unc-89 and unc-112 to integrin-mediated attachment sites. Plays a role in distal tip cell (DTC) migration and in oocyte development probably by regulating the actin cytoskeleton. During the formation of neuromuscular junctions at the larval stage, negatively regulates membrane protrusion from body wall muscles. May be involved in thermotolerance and lifespan. The polypeptide is Integrin-linked protein kinase homolog pat-4 (Caenorhabditis elegans).